A 199-amino-acid polypeptide reads, in one-letter code: Golgi to ER traffic protein 1 (199 aa).

Over 1-11 the chain is Lumenal; the sequence is MLLPDLHPYTI. The helical transmembrane segment at 12-31 threads the bilayer; that stretch reads LLSIFIVLLLKQLVASIGKS. Residues 32 to 115 are Cytoplasmic-facing; the sequence is TIKEFVWLVY…SIDKVSNALL (84 aa). A coiled-coil region spans residues 66-116; that stretch reads EKRAISAQDEYAKWTKLNRQADKLSAELQKLNQEIQQQKASIDKVSNALLL. The chain crosses the membrane as a helical span at residues 116-136; it reads LVLTTLPIWVARVLYRNTHLF. Residues 137-160 lie on the Lumenal side of the membrane; sequence YIRQGIFPKYVEWVLALPFLPNGA. A helical transmembrane segment spans residues 161 to 177; sequence VGLTIWMFAVNSVVSNF. Residues 178-199 are Cytoplasmic-facing; it reads AFLVSFPFAKKVSKPVRDTKIE.

Belongs to the WRB/GET1 family. In terms of assembly, component of the Golgi to ER traffic (GET) complex, which is composed of GET1, GET2 and GET3. Within the complex, GET1 and GET2 form a heterotetramer which is stabilized by phosphatidylinositol binding and which binds to the GET3 homodimer.

Its subcellular location is the endoplasmic reticulum membrane. The protein resides in the golgi apparatus membrane. Functionally, required for the post-translational delivery of tail-anchored (TA) proteins to the endoplasmic reticulum. Together with GET2, acts as a membrane receptor for soluble GET3, which recognizes and selectively binds the transmembrane domain of TA proteins in the cytosol. The GET complex cooperates with the HDEL receptor ERD2 to mediate the ATP-dependent retrieval of resident ER proteins that contain a C-terminal H-D-E-L retention signal from the Golgi to the ER. This chain is Golgi to ER traffic protein 1, found in Candida dubliniensis (strain CD36 / ATCC MYA-646 / CBS 7987 / NCPF 3949 / NRRL Y-17841) (Yeast).